We begin with the raw amino-acid sequence, 210 residues long: Large ribosomal subunit protein uL4 (210 aa).

The span at 41–51 shows a compositional bias: polar residues; it reads QNNARQGNASA. The segment at 41–77 is disordered; sequence QNNARQGNASAKTRAEVRGGGRKPWKQKGTGRARAGS. Basic residues predominate over residues 60–71; the sequence is GGRKPWKQKGTG.

Belongs to the universal ribosomal protein uL4 family. In terms of assembly, part of the 50S ribosomal subunit.

In terms of biological role, one of the primary rRNA binding proteins, this protein initially binds near the 5'-end of the 23S rRNA. It is important during the early stages of 50S assembly. It makes multiple contacts with different domains of the 23S rRNA in the assembled 50S subunit and ribosome. Its function is as follows. Forms part of the polypeptide exit tunnel. This Synechocystis sp. (strain ATCC 27184 / PCC 6803 / Kazusa) protein is Large ribosomal subunit protein uL4.